A 727-amino-acid polypeptide reads, in one-letter code: MASCPDSDNSWVLAGSENLPVETLGPEPRMDPESEGASQALRDSSKADGKELAGTLDGEEKLFQTESSQRETAVLTESAAKGTLGADGHGTEAPGDTVVQEDSQETPVATSLGPDTQDLESEIHPQNLPSSPRAVWKEHRCSSSDDDTDVDVEGLRRRRGREPSSSQPVVPVDVEDQAKGEGIGGELGISLNMCFLGALVLLGLGILLFSGTLLEPETGPMEEAELQVFPETGPETELVETLGNRQDEIEHLQASSVPPDSVPSLQSMGFLLDKLAKENQDIRLLQAQLQAQKEELQSLLHQPKGLEEENARLREALQQGKTSHQALESELQQLRARLQGLEANCVRGVDGVCLNWGGDPQDGKATKEQGHKGQEPDPSLLEQHKQLEAEAKALRQELQRQWQLLGSVHWDLQRGLRDAGRGAPAHPGLAELGHMLAQTLQDLENQGINTGRSPNDSEAWHQKKPHTQSPREWGGKEKWRGGQRDQKAEHWKPRKEESGQERQRSWRDEGREHTGRWREDRLRADESGSRKDSKRQDPKVHPRKDGNSHSVERQKHSWGKDNSPDALSSWEELLRRKYRPPQGCSGVADCARQEGLALFGVELAPVRQQELASVLREYLSRLPWAGQLTKQLPLSPAYFGEDGIFRHDRLRFRDFVDALEDSLEEVALKQTGDDDEVDDFEDFVFGHFFGDKALKKRSRKKEKHSWNPRVVGPREEHSRHPHHYHQG.

Polar residues predominate over residues 1–10; it reads MASCPDSDNS. A disordered region spans residues 1–169; that stretch reads MASCPDSDNS…GREPSSSQPV (169 aa). Phosphoserine is present on residues S131, S142, S143, and S144. T148 bears the Phosphothreonine mark. The residue at position 164 (S164) is a Phosphoserine. Coiled coils occupy residues 270-350 and 377-405; these read FLLD…RGVD and DPSLLEQHKQLEAEAKALRQELQRQWQLL. A compositionally biased stretch (polar residues) spans 446–456; it reads QGINTGRSPND. Disordered stretches follow at residues 446-565 and 694-727; these read QGIN…NSPD and LKKRSRKKEKHSWNPRVVGPREEHSRHPHHYHQG. Residues 473–563 show a composition bias toward basic and acidic residues; it reads WGGKEKWRGG…QKHSWGKDNS (91 aa). The Nuclear localization signal signature appears at 486 to 506; sequence QKAEHWKPRKEESGQERQRSW. S563 is subject to Phosphoserine. Residues 691-716 carry the Nuclear localization signal motif; it reads DKALKKRSRKKEKHSWNPRVVGPREE. A compositionally biased stretch (basic residues) spans 694-703; the sequence is LKKRSRKKEK.

Interacts with ESR1, PBX1, PBX2 and PBX3. Interacts with TEX11.

The protein resides in the cytoplasm. Its subcellular location is the cytoskeleton. It localises to the nucleus. Functionally, regulator of pre-B-cell leukemia transcription factors (BPXs) function. Inhibits the binding of PBX1-HOX complex to DNA and blocks the transcriptional activity of E2A-PBX1. Tethers estrogen receptor-alpha (ESR1) to microtubules and allows them to influence estrogen receptors-alpha signaling. The protein is Pre-B-cell leukemia transcription factor-interacting protein 1 (Pbxip1) of Mus musculus (Mouse).